The sequence spans 410 residues: Lissencephaly-1 homolog (410 aa).

Residues Gln-7–Asn-39 form the LisH domain. A coiled-coil region spans residues Lys-32 to Gly-82. WD repeat units follow at residues Gly-106 to Lys-147, Gly-148 to His-189, Gly-190 to Thr-229, Gly-232 to Glu-271, Glu-274 to Thr-333, Gly-336 to Thr-375, and Ala-378 to Arg-410.

The protein belongs to the WD repeat LIS1/nudF family. As to quaternary structure, can self-associate. Component of the cytosolic PAF-AH (I) heterotetrameric enzyme, which is composed of PAFAH1B1 (beta), PAFAH1B2 (alpha2) and PAFAH1B3 (alpha1) subunits. The catalytic activity of the enzyme resides in the alpha1 (PAFAH1B3) and alpha2 (PAFAH1B2) subunits, whereas the beta subunit (PAFAH1B1) has regulatory activity. Trimer formation is not essential for the catalytic activity. Interacts with dynein, dynactin, nde1 and ndel1.

Its subcellular location is the cytoplasm. It is found in the cytoskeleton. The protein resides in the microtubule organizing center. The protein localises to the centrosome. Regulatory subunit (beta subunit) of the cytosolic type I platelet-activating factor (PAF) acetylhydrolase (PAF-AH (I)), an enzyme that catalyzes the hydrolyze of the acetyl group at the sn-2 position of PAF and its analogs and participates in the PAF inactivation. Positively regulates the activity of the minus-end directed microtubule motor protein dynein. May enhance dynein-mediated microtubule sliding by targeting dynein to the microtubule plus end. Required for several dynein- and microtubule-dependent processes such as the maintenance of Golgi integrity, the peripheral transport of microtubule fragments and the coupling of the nucleus and centrosome. May be required for proliferation of neuronal precursors and neuronal migration. The chain is Lissencephaly-1 homolog (pafah1b1) from Tetraodon nigroviridis (Spotted green pufferfish).